The primary structure comprises 811 residues: Transmembrane protease serine 6 (811 aa).

Over 1-55 the chain is Cytoplasmic; the sequence is MLLLFHSKRMPVAEAPQVAGGQGDGGDGEEAEPEGMFKACEDSKRKARGYLRLVP. The helical; Signal-anchor for type II membrane protein transmembrane segment at 56 to 76 threads the bilayer; sequence LFVLLALLVLASAGVLLWYFL. The Extracellular portion of the chain corresponds to 77–811; it reads GYKAEVMVSQ…VISWIQQVVT (735 aa). Positions 84–209 constitute an SEA domain; the sequence is VSQVYSGSLR…EGLVILEASV (126 aa). N-linked (GlcNAc...) asparagine glycans are attached at residues Asn136, Asn184, Asn216, Asn338, Asn433, and Asn453. 2 consecutive CUB domains span residues 213 to 336 and 335 to 452; these read AALN…QACE and CEVN…YGLY. Cys335 and Cys366 are oxidised to a cystine. LDL-receptor class A domains follow at residues 457 to 489, 490 to 526, and 530 to 567; these read PCPG…ERNC, VCRA…EQCQ, and PCGT…EHCD. 10 disulfides stabilise this stretch: Cys458–Cys470, Cys464–Cys480, Cys474–Cys489, Cys491–Cys503, Cys497–Cys516, Cys510–Cys525, Cys531–Cys543, Cys538–Cys557, Cys551–Cys566, and Cys602–Cys618. Asn518 carries N-linked (GlcNAc...) asparagine glycosylation. In terms of domain architecture, Peptidase S1 spans 577–811; that stretch reads IVGGAVSSEG…VISWIQQVVT (235 aa). Residues His617 and Asp668 each act as charge relay system in the active site. 3 disulfides stabilise this stretch: Cys702/Cys768, Cys733/Cys747, and Cys758/Cys787. Residue Ser762 is the Charge relay system of the active site.

The protein belongs to the peptidase S1 family. In terms of assembly, interacts with HJV. In terms of processing, the single-chain zymogen undergoes autoproteolytic processing. This results in TMPRSS6 shedding from the cell surface and conversion into an activated two-chains form which is released extracellularly. The process involves a trans-activation mechanism that requires TMPRSS6 oligomerization.

The protein localises to the cell membrane. In terms of biological role, membrane-bound serine protease. Through the cleavage of cell surface hemojuvelin (HJV), a regulator of the expression of the iron absorption-regulating hormone hepicidin/HAMP, plays a role in iron homeostasis. In Homo sapiens (Human), this protein is Transmembrane protease serine 6 (TMPRSS6).